The primary structure comprises 367 residues: UDP-N-acetylglucosamine--N-acetylmuramyl-(pentapeptide) pyrophosphoryl-undecaprenol N-acetylglucosamine transferase (367 aa).

UDP-N-acetyl-alpha-D-glucosamine contacts are provided by residues 15–17 (TGG), Asn127, Arg163, Ser191, Ile249, and Gln294.

It belongs to the glycosyltransferase 28 family. MurG subfamily.

It localises to the cell inner membrane. The catalysed reaction is di-trans,octa-cis-undecaprenyl diphospho-N-acetyl-alpha-D-muramoyl-L-alanyl-D-glutamyl-meso-2,6-diaminopimeloyl-D-alanyl-D-alanine + UDP-N-acetyl-alpha-D-glucosamine = di-trans,octa-cis-undecaprenyl diphospho-[N-acetyl-alpha-D-glucosaminyl-(1-&gt;4)]-N-acetyl-alpha-D-muramoyl-L-alanyl-D-glutamyl-meso-2,6-diaminopimeloyl-D-alanyl-D-alanine + UDP + H(+). The protein operates within cell wall biogenesis; peptidoglycan biosynthesis. Cell wall formation. Catalyzes the transfer of a GlcNAc subunit on undecaprenyl-pyrophosphoryl-MurNAc-pentapeptide (lipid intermediate I) to form undecaprenyl-pyrophosphoryl-MurNAc-(pentapeptide)GlcNAc (lipid intermediate II). The polypeptide is UDP-N-acetylglucosamine--N-acetylmuramyl-(pentapeptide) pyrophosphoryl-undecaprenol N-acetylglucosamine transferase (Burkholderia thailandensis (strain ATCC 700388 / DSM 13276 / CCUG 48851 / CIP 106301 / E264)).